We begin with the raw amino-acid sequence, 151 residues long: Prefoldin subunit alpha (151 aa).

Positions 120–151 are disordered; that stretch reads TVEEETASLEEKAQQAQQQQMQQLQQMQQEDE. Residues 133–151 are compositionally biased toward low complexity; it reads QQAQQQQMQQLQQMQQEDE.

Belongs to the prefoldin subunit alpha family. As to quaternary structure, heterohexamer of two alpha and four beta subunits.

The protein resides in the cytoplasm. Its function is as follows. Molecular chaperone capable of stabilizing a range of proteins. Seems to fulfill an ATP-independent, HSP70-like function in archaeal de novo protein folding. This is Prefoldin subunit alpha from Natronomonas pharaonis (strain ATCC 35678 / DSM 2160 / CIP 103997 / JCM 8858 / NBRC 14720 / NCIMB 2260 / Gabara) (Halobacterium pharaonis).